Here is a 351-residue protein sequence, read N- to C-terminus: Tsukushi-A (351 aa).

The signal sequence occupies residues 1–17; sequence MALSSWIFFLLVHGIVG. LRR repeat units follow at residues 59–82, 85–108, 109–132, 134–155, 158–181, 182–203, 204–226, 252–276, and 277–300; these read PLDT…VLSG, YTTL…TFSK, LRYL…SFLY, RLTE…AFTL, QGRS…AERP, VPNI…DLHG, IPLR…SFLG, LTSL…MFFG, and LKAL…IMLH.

In terms of assembly, interacts with bmp4. Interacts with dll1 (via extracellular region). Interacts with fgf8; inhibits fgf8 signaling. Interacts with nodal2/Xnr2; enhances nodal2 activity. As to expression, during embryogenesis, localized to the animal hemisphere during late blastula and gastrula stages. At stage 10, expression is also detected around the dorsal blastopore lip. Expressed in the mandibular crest segment, branchial crest segment and differentiating somites at stage 21/22. Expressed in the germ ring including the shield at shield stage and in the tailbud at the 10-somite stage. At the early neurula stage (stage 13), expression is hardly detectable in the presumptive neural plate region, and restricted to the non-neural ectoderm where its levels increase by stage 14, especially in the presumptive anterior neural fold. Also expressed in the prospective cranial neural crest. At the early tailbud stage (stage 23), expressed in cranial neural crest cells, the dorsal retina and the lens placode.

Its subcellular location is the secreted. Functionally, contributes to various developmental events through its interactions with multiple signaling pathways. Dorsalizing factor which functions as an inhibitor of bone morphogenetic proteins (BMP) during gastrulation. Promotes dll1-dependent activation of Notch signaling and is required for neural crest formation. Induces endoderm and dorsal mesoderm formation by enhancing nodal2/Xnr2 activity while inhibiting ventrolateral mesoderm formation through inhibition of fgf8. The polypeptide is Tsukushi-A (Xenopus laevis (African clawed frog)).